We begin with the raw amino-acid sequence, 161 residues long: Ecotin (161 aa).

The signal sequence occupies residues M1 to A23. Cysteines 69 and 106 form a disulfide.

Belongs to the protease inhibitor I11 (ecotin) family. Homodimer.

It localises to the periplasm. General inhibitor of family S1 serine proteases. The sequence is that of Ecotin from Pseudomonas fluorescens (strain Pf0-1).